We begin with the raw amino-acid sequence, 199 residues long: UPF0316 protein LA_0606 (199 aa).

The next 2 membrane-spanning stretches (helical) occupy residues 47-67 and 73-93; these read IAAS…TQVI and VFCY…GMIL.

This sequence belongs to the UPF0316 family.

The protein localises to the cell membrane. This chain is UPF0316 protein LA_0606, found in Leptospira interrogans serogroup Icterohaemorrhagiae serovar Lai (strain 56601).